A 463-amino-acid chain; its full sequence is Probable glycosyltransferase 3 (463 aa).

The Cytoplasmic portion of the chain corresponds to 1–24 (MAVTGGGRPAVRQQAARGKQMQRT). Residues 25-47 (FNNVKITLICGFITLLVLRGTVG) form a helical; Signal-anchor for type II membrane protein membrane-spanning segment. Residues 48–463 (INLLTYGVGG…ALKMDAKIES (416 aa)) lie on the Lumenal side of the membrane. Residues 82–125 (EIRSDTDDDDDDEEEEPLGVDASTTTTTNSTTTTATAARRRSSN) form a disordered region. The segment covering 87–99 (TDDDDDDEEEEPL) has biased composition (acidic residues). Positions 103–118 (ASTTTTTNSTTTTATA) are enriched in low complexity. Asn110, Asn125, and Asn442 each carry an N-linked (GlcNAc...) asparagine glycan.

This sequence belongs to the glycosyltransferase 34 family.

Its subcellular location is the golgi apparatus membrane. Probable glycosyltransferase that may be involved in the biosynthesis of xyloglucan. This chain is Probable glycosyltransferase 3, found in Oryza sativa subsp. japonica (Rice).